We begin with the raw amino-acid sequence, 454 residues long: Tyrosine aminotransferase (454 aa).

Residue Met-1 is modified to N-acetylmethionine. The residue at position 280 (Lys-280) is an N6-(pyridoxal phosphate)lysine. A Phosphoserine modification is found at Ser-448.

This sequence belongs to the class-I pyridoxal-phosphate-dependent aminotransferase family. As to quaternary structure, homodimer. Requires pyridoxal 5'-phosphate as cofactor.

The catalysed reaction is L-tyrosine + 2-oxoglutarate = 3-(4-hydroxyphenyl)pyruvate + L-glutamate. The protein operates within amino-acid degradation; L-phenylalanine degradation; acetoacetate and fumarate from L-phenylalanine: step 2/6. Functionally, transaminase involved in tyrosine breakdown. Converts tyrosine to p-hydroxyphenylpyruvate. Can catalyze the reverse reaction, using glutamic acid, with 2-oxoglutarate as cosubstrate (in vitro). Has much lower affinity and transaminase activity towards phenylalanine. This is Tyrosine aminotransferase (TAT) from Homo sapiens (Human).